Here is a 409-residue protein sequence, read N- to C-terminus: MATAASASASASPAAAFGAKTRRPGPSPSPSPSPASAFARPSPRASAAGRLHASLHLGGASATGSSIVSNASGIHLAAPVLAPLAVPKMTGAVGAHKNVLLFHCEEMRELAEQVVARNDDIELRSISWRTFADGFPNLFISNAHTIRGQHVAFLASFSSPSVIFEQLSIIYALPKLFISSFTLILPFFPTGTSERMEDEGDVATAFTLARILSNIPISRGGPSSLVIFDIHALQERFYFGDSVLPCFESGIPLLKSRLQELPDSDNITIAFPDDGAWKRFYKQLQHFPMVVCNKVREGEQRIVRIKEGDPRGRHVVIVDDLVQSGGTLIECQKVLAEHGAAKVSAYVTHGIFPNKSWEKFQPDNGEGPGHGLSHFWITDSCPLTVNAVKDRQPFEILSLAGPIASALQI.

Low complexity-rich tracts occupy residues 1–16 (MATAASASASASPAAA) and 34–43 (PASAFARPSP). A disordered region spans residues 1–43 (MATAASASASASPAAAFGAKTRRPGPSPSPSPSPASAFARPSP). Residues 1 to 44 (MATAASASASASPAAAFGAKTRRPGPSPSPSPSPASAFARPSPR) constitute a chloroplast transit peptide. Mg(2+) is bound by residues Asp229 and His231. Residues 312–327 (GRHVVIVDDLVQSGGT) are binding of phosphoribosylpyrophosphate.

The protein belongs to the ribose-phosphate pyrophosphokinase family. The cofactor is Mg(2+).

Its subcellular location is the plastid. It is found in the chloroplast. The catalysed reaction is D-ribose 5-phosphate + ATP = 5-phospho-alpha-D-ribose 1-diphosphate + AMP + H(+). This is Ribose-phosphate pyrophosphokinase 3, chloroplastic from Oryza sativa subsp. japonica (Rice).